The sequence spans 130 residues: Small ribosomal subunit protein uS9 (130 aa).

The protein belongs to the universal ribosomal protein uS9 family.

The polypeptide is Small ribosomal subunit protein uS9 (Pectobacterium atrosepticum (strain SCRI 1043 / ATCC BAA-672) (Erwinia carotovora subsp. atroseptica)).